The chain runs to 396 residues: Non-homologous end joining protein Ku (396 aa).

Residues 9 to 189 form the Ku domain; the sequence is ISFGLVSIPV…DVAVRPQELS (181 aa). Over residues 278-288 the composition is skewed to low complexity; sequence DGDAGPAAAGV. The tract at residues 278-396 is disordered; sequence DGDAGPAAAG…SKTPPTRRSA (119 aa). Residues 294–312 show a composition bias toward basic and acidic residues; that stretch reads DDKASDDKASDDKASDGRR. Over residues 315-336 the composition is skewed to polar residues; sequence RTSSVKGASSAPGTRSTARKTP. Low complexity predominate over residues 337–396; the sequence is SSTRSTAKTNAATKTPPAKTSAAKASAAKTSAAKATSSRTAPKTAPRTPTSKTPPTRRSA.

The protein belongs to the prokaryotic Ku family. Homodimer. Interacts with LigD.

Its function is as follows. With LigD forms a non-homologous end joining (NHEJ) DNA repair enzyme, which repairs dsDNA breaks with reduced fidelity. Binds linear dsDNA with 5'- and 3'- overhangs but not closed circular dsDNA nor ssDNA. Recruits and stimulates the ligase activity of LigD. This is Non-homologous end joining protein Ku from Frankia casuarinae (strain DSM 45818 / CECT 9043 / HFP020203 / CcI3).